Reading from the N-terminus, the 421-residue chain is NADH-dependent phenylglyoxylate dehydrogenase subunit epsilon (421 aa).

Residues 15 to 18, 39 to 40, and 279 to 297 contribute to the FAD site; these read SSHA, TR, and ATAQ…NAIL.

It belongs to the FAD-dependent oxidoreductase family. In terms of assembly, dimer of heteropentamers composed of an alpha (PadG), a beta (PadI), a gamma (PadE), a delta (PadF) and an epsilon (PadH) subunit. The cofactor is FAD.

It catalyses the reaction phenylglyoxylate + NAD(+) + CoA = benzoyl-CoA + CO2 + NADH. Activated by magnesium ions and thiamine diphosphate. Involved in the anaerobic metabolism of phenylalanine and phenylacetate. Catalyzes the oxidative decarboxylation of phenylglyoxylate to benzoyl-CoA and CO(2). It can also react slowly with 2-oxo-3-methylbutanoate and use different electron acceptors such as benzyl viologen, methyl viologen, FAD or FMN, but NAD seems to be the physiological electron acceptor. Also catalyzes an isotope exchange between CO(2) and the carboxyl group which proves partial or complete reversibility of the oxidative decarboxylation reaction. This chain is NADH-dependent phenylglyoxylate dehydrogenase subunit epsilon (padH), found in Aromatoleum evansii (Azoarcus evansii).